We begin with the raw amino-acid sequence, 84 residues long: Small ribosomal subunit protein uS17 (84 aa).

The protein belongs to the universal ribosomal protein uS17 family. In terms of assembly, part of the 30S ribosomal subunit.

Functionally, one of the primary rRNA binding proteins, it binds specifically to the 5'-end of 16S ribosomal RNA. The sequence is that of Small ribosomal subunit protein uS17 from Alkaliphilus oremlandii (strain OhILAs) (Clostridium oremlandii (strain OhILAs)).